The chain runs to 517 residues: Cytochrome P450 78A5 (517 aa).

A helical membrane pass occupies residues 20–40 (AFASVSLIIATVAFLLSPGGL). Position 459 (C459) interacts with heme.

Belongs to the cytochrome P450 family. Heme serves as cofactor. Expressed in the periphery of the shoot apical meristem and inflorescence meristem, on the adaxial sides of developing floral organs and in developing ovules in the region where the integuments emerge.

The protein resides in the membrane. Functionally, plays a role in regulating directional growth at the meristem/organ boundary. Is required for the promotion of leaf and floral organ growth and for the prolongation of the plastochron. Promotes organ growth in a non-cell-autonomous manner and may generate a mobile growth signal distinct from the classical phytohormones that prevents premature arrest of proliferation, until the correct primordium size has been reached. Functions probably in association with CYP78A7 in regulating relative growth of the shoot apical meristem and plant organs. Is required locally in developing ovules to stimulates cell proliferation and promote seed growth. This chain is Cytochrome P450 78A5 (CYP78A5), found in Arabidopsis thaliana (Mouse-ear cress).